A 557-amino-acid polypeptide reads, in one-letter code: NAD(P)H-quinone oxidoreductase chain 4 (557 aa).

Transmembrane regions (helical) follow at residues 25 to 45 (FPWL…VPFI), 57 to 77 (YALF…LKGF), 111 to 131 (LILL…PVSF), 133 to 153 (PKLF…VFAV), 157 to 177 (LLFF…LAIW), 189 to 209 (FIIY…AMGF), 230 to 250 (GFQL…LPIV), 264 to 284 (TAPV…YALL), 298 to 318 (FAPL…LTSF), 327 to 347 (IAYS…SFST), 353 to 373 (AMLQ…LVGA), 397 to 417 (FALW…SGFV), 438 to 458 (IVIA…LLSM), and 485 to 505 (IYII…PRIM).

It belongs to the complex I subunit 4 family.

The protein resides in the cellular thylakoid membrane. It carries out the reaction a plastoquinone + NADH + (n+1) H(+)(in) = a plastoquinol + NAD(+) + n H(+)(out). The catalysed reaction is a plastoquinone + NADPH + (n+1) H(+)(in) = a plastoquinol + NADP(+) + n H(+)(out). Its function is as follows. NDH-1 shuttles electrons from NAD(P)H, via FMN and iron-sulfur (Fe-S) centers, to quinones in the respiratory chain. The immediate electron acceptor for the enzyme in this species is believed to be plastoquinone. Couples the redox reaction to proton translocation (for every two electrons transferred, four hydrogen ions are translocated across the cytoplasmic membrane), and thus conserves the redox energy in a proton gradient. This chain is NAD(P)H-quinone oxidoreductase chain 4, found in Prochlorococcus marinus (strain SARG / CCMP1375 / SS120).